The primary structure comprises 385 residues: MAAVETRVCETAGCSSEAKLQCPTCLKLGIQGSYFCSQECFKGSWATHKLLHKKAKDEKAKREVSSWTLEGDINTNPWSGYRYTGKLRPHYPLTPTRPVPSYIQRPDYADHPLGMSESEQALKGTSQIKILSPEDIEGMRVVCRLAREVLDVAAMMVKAGVTTEEIDHAVHLACIARNCYPSPLNYYNFPKSCCTSVNEVICHGIPDRRPLQEGDIVNVDITVYRNGYHGDLNETFYVGEVDEGAKRLVQTTYECLMQAIDAVKPGVRYRELGNIIQKHAQANGFSVVRSYCGHGIHKLFHTAPNVPHYAKNKAVGVMKPGHVFTIEPMICEGGWQDETWPDGWTAVTRDGKRSAQFEHTLLVTDTGCEILTRRLDSIRPHFMSQ.

The C6H2-type zinc finger occupies 6–59 (TRVCETAGCSSEAKLQCPTCLKLGIQGSYFCSQECFKGSWATHKLLHKKAKDEK). Positions 9, 14, 22, 25, 36, 40, 48, and 52 each coordinate Zn(2+). His-203 lines the a protein pocket. Asp-220, Asp-231, and His-294 together coordinate Zn(2+). An a protein-binding site is contributed by His-301. The Zn(2+) site is built by Glu-327 and Glu-358.

The protein belongs to the peptidase M24A family. Methionine aminopeptidase type 1 subfamily. As to quaternary structure, associates with the 60S ribosomal subunit of the 80S translational complex. The cofactor is Zn(2+). Co(2+) serves as cofactor. Mn(2+) is required as a cofactor. Requires Fe(2+) as cofactor.

The protein resides in the cytoplasm. The enzyme catalyses Release of N-terminal amino acids, preferentially methionine, from peptides and arylamides.. Cotranslationally removes the N-terminal methionine from nascent proteins. The N-terminal methionine is often cleaved when the second residue in the primary sequence is small and uncharged (Met-Ala-, Cys, Gly, Pro, Ser, Thr, or Val). The protein is Methionine aminopeptidase 1 (METAP1) of Gallus gallus (Chicken).